A 375-amino-acid polypeptide reads, in one-letter code: tRNA-specific 2-thiouridylase MnmA (375 aa).

Residues Ala-9 to Ser-16 and Leu-35 each bind ATP. Cys-105 (nucleophile) is an active-site residue. Cys-105 and Cys-201 are joined by a disulfide. Residue Gly-129 participates in ATP binding. Positions Lys-151–Gln-153 are interaction with tRNA. The active-site Cysteine persulfide intermediate is the Cys-201. The interval Arg-307–Tyr-308 is interaction with tRNA.

Belongs to the MnmA/TRMU family.

Its subcellular location is the cytoplasm. The enzyme catalyses S-sulfanyl-L-cysteinyl-[protein] + uridine(34) in tRNA + AH2 + ATP = 2-thiouridine(34) in tRNA + L-cysteinyl-[protein] + A + AMP + diphosphate + H(+). Catalyzes the 2-thiolation of uridine at the wobble position (U34) of tRNA, leading to the formation of s(2)U34. The sequence is that of tRNA-specific 2-thiouridylase MnmA from Leptospira interrogans serogroup Icterohaemorrhagiae serovar copenhageni (strain Fiocruz L1-130).